The sequence spans 641 residues: Pre-mRNA-processing factor 39 (641 aa).

A disordered region spans residues 1–50; sequence MEKSPEHCAEGSPSPATESAPSATEPPLPSTEPPLPSTEPPLPSTEPPLP. Residues 10–23 are compositionally biased toward low complexity; sequence EGSPSPATESAPSA. The span at 24–50 shows a compositional bias: pro residues; that stretch reads TEPPLPSTEPPLPSTEPPLPSTEPPLP. 7 HAT repeats span residues 50 to 82, 84 to 116, 118 to 150, 158 to 193, 304 to 336, 338 to 370, and 372 to 407; these read PPLP…YVEQ, NHLF…LEKK, NNIL…FLKE, ETSL…WETE, NFEE…FELE, GSNE…YMEN, and SVEG…QQGN.

This sequence belongs to the PRP39 family.

The protein localises to the nucleus. Its function is as follows. Involved in pre-mRNA splicing. The chain is Pre-mRNA-processing factor 39 (prpf39) from Xenopus laevis (African clawed frog).